The primary structure comprises 242 residues: ATP-dependent dethiobiotin synthetase BioD (242 aa).

12–17 (SVGKTI) provides a ligand contact to ATP. Thr16 is a binding site for Mg(2+). The active site involves Lys37. Asp66 provides a ligand contact to ATP. Positions 66 and 124 each coordinate Mg(2+). 184-185 (NR) provides a ligand contact to ATP.

It belongs to the dethiobiotin synthetase family. Homodimer. Requires Mg(2+) as cofactor.

It localises to the cytoplasm. The enzyme catalyses (7R,8S)-7,8-diammoniononanoate + CO2 + ATP = (4R,5S)-dethiobiotin + ADP + phosphate + 3 H(+). It participates in cofactor biosynthesis; biotin biosynthesis; biotin from 7,8-diaminononanoate: step 1/2. In terms of biological role, catalyzes a mechanistically unusual reaction, the ATP-dependent insertion of CO2 between the N7 and N8 nitrogen atoms of 7,8-diaminopelargonic acid (DAPA, also called 7,8-diammoniononanoate) to form a ureido ring. In Mannheimia succiniciproducens (strain KCTC 0769BP / MBEL55E), this protein is ATP-dependent dethiobiotin synthetase BioD.